The chain runs to 261 residues: Kallikrein 1-related peptidase b3 (261 aa).

Positions 1 to 18 (MWFLILFLALSLGGIDAA) are cleaved as a signal peptide. Residues 19–24 (PPVQSR) constitute a propeptide, activation peptide. The interval 25 to 107 (IVGGFKCEKN…HPGFNMSLMR (83 aa)) is segment B1. One can recognise a Peptidase S1 domain in the interval 25-258 (IVGGFKCEKN…FTSWIKDTMA (234 aa)). 5 disulfide bridges follow: cysteine 31–cysteine 173, cysteine 50–cysteine 66, cysteine 152–cysteine 219, cysteine 184–cysteine 198, and cysteine 209–cysteine 234. The active-site Charge relay system is histidine 65. An N-linked (GlcNAc...) asparagine glycan is attached at asparagine 102. The interval 112 to 164 (FLEYDYSNDLMLLRLSKPADITDTVKPITLPTEEPKLGSTCLASGWGSITPTK) is segment C. The segment A stretch occupies residues 112-261 (FLEYDYSNDL…WIKDTMAKNP (150 aa)). Aspartate 120 serves as the catalytic Charge relay system. The segment B2 stretch occupies residues 165 to 261 (FQFTDDLYCV…WIKDTMAKNP (97 aa)). Residue serine 213 is the Charge relay system of the active site. Zn(2+)-binding residues include histidine 231 and glutamate 236.

This sequence belongs to the peptidase S1 family. Kallikrein subfamily. In terms of assembly, 7S nerve growth factor is composed of two alpha chains, a beta dimer composed of identical chains, and two gamma chains. Requires Zn(2+) as cofactor.

The catalysed reaction is Preferential cleavage of Arg-|-Xaa bonds in small molecule substrates. Highly selective action to release kallidin (lysyl-bradykinin) from kininogen involves hydrolysis of Met-|-Xaa or Leu-|-Xaa.. In terms of biological role, 7S NGF alpha chain stabilizes the 7S complex. The beta dimer promotes neurite growth. The gamma chain is an arginine-specific protease; it may also have plasminogen activator activity, as well as mitogenic activity for chick embryo fibroblasts. The chain is Kallikrein 1-related peptidase b3 (Klk1b3) from Mus musculus (Mouse).